The chain runs to 562 residues: Arginine--tRNA ligase (562 aa).

The short motif at 129–139 is the 'HIGH' region element; that stretch reads ANPTGPLHVGH.

The protein belongs to the class-I aminoacyl-tRNA synthetase family. In terms of assembly, monomer.

It is found in the cytoplasm. It carries out the reaction tRNA(Arg) + L-arginine + ATP = L-arginyl-tRNA(Arg) + AMP + diphosphate. The chain is Arginine--tRNA ligase from Xylella fastidiosa (strain M23).